Reading from the N-terminus, the 528-residue chain is Chaperonin GroEL, chloroplastic (528 aa).

Residues 29–32 (TLGP), 86–90 (DGTTT), G414, and D496 each bind ATP.

This sequence belongs to the chaperonin (HSP60) family. Forms a cylinder of 14 subunits composed of two heptameric rings stacked back-to-back. Interacts with the co-chaperonin GroES.

It localises to the plastid. The protein resides in the chloroplast. The enzyme catalyses ATP + H2O + a folded polypeptide = ADP + phosphate + an unfolded polypeptide.. Its function is as follows. Together with its co-chaperonin GroES, plays an essential role in assisting protein folding. The GroEL-GroES system forms a nano-cage that allows encapsulation of the non-native substrate proteins and provides a physical environment optimized to promote and accelerate protein folding. The chain is Chaperonin GroEL, chloroplastic from Porphyra purpurea (Red seaweed).